The primary structure comprises 156 residues: Probable cyclic pyranopterin monophosphate synthase (156 aa).

Residues 73–75 (MCH) and 109–110 (ME) each bind substrate. The active site involves D124.

This sequence belongs to the MoaC family. In terms of assembly, homohexamer; trimer of dimers.

The catalysed reaction is (8S)-3',8-cyclo-7,8-dihydroguanosine 5'-triphosphate = cyclic pyranopterin phosphate + diphosphate. The protein operates within cofactor biosynthesis; molybdopterin biosynthesis. Functionally, catalyzes the conversion of (8S)-3',8-cyclo-7,8-dihydroguanosine 5'-triphosphate to cyclic pyranopterin monophosphate (cPMP). The polypeptide is Probable cyclic pyranopterin monophosphate synthase (Archaeoglobus fulgidus (strain ATCC 49558 / DSM 4304 / JCM 9628 / NBRC 100126 / VC-16)).